The primary structure comprises 330 residues: Aspartate--ammonia ligase (330 aa).

Belongs to the class-II aminoacyl-tRNA synthetase family. AsnA subfamily.

It is found in the cytoplasm. The catalysed reaction is L-aspartate + NH4(+) + ATP = L-asparagine + AMP + diphosphate + H(+). Its pathway is amino-acid biosynthesis; L-asparagine biosynthesis; L-asparagine from L-aspartate (ammonia route): step 1/1. This chain is Aspartate--ammonia ligase, found in Streptococcus pyogenes serotype M2 (strain MGAS10270).